Consider the following 447-residue polypeptide: Probable glycine dehydrogenase (decarboxylating) subunit 1 (447 aa).

It belongs to the GcvP family. N-terminal subunit subfamily. In terms of assembly, the glycine cleavage system is composed of four proteins: P, T, L and H. In this organism, the P 'protein' is a heterodimer of two subunits.

It catalyses the reaction N(6)-[(R)-lipoyl]-L-lysyl-[glycine-cleavage complex H protein] + glycine + H(+) = N(6)-[(R)-S(8)-aminomethyldihydrolipoyl]-L-lysyl-[glycine-cleavage complex H protein] + CO2. Its function is as follows. The glycine cleavage system catalyzes the degradation of glycine. The P protein binds the alpha-amino group of glycine through its pyridoxal phosphate cofactor; CO(2) is released and the remaining methylamine moiety is then transferred to the lipoamide cofactor of the H protein. This Maricaulis maris (strain MCS10) (Caulobacter maris) protein is Probable glycine dehydrogenase (decarboxylating) subunit 1.